Reading from the N-terminus, the 236-residue chain is Small ribosomal subunit protein uS2c (236 aa).

Belongs to the universal ribosomal protein uS2 family.

The protein localises to the plastid. It localises to the chloroplast. This is Small ribosomal subunit protein uS2c (rps2) from Chaetosphaeridium globosum (Charophycean green alga).